The primary structure comprises 802 residues: MYRSTKGASKARRDQINAEIRNLKELLPLAEADKVRLSYLHIMSLACIYTRKGVFFAGGTPLAGPTGLLSAQELEDIVAALPGFLLVFTAEGKLLYLSESVSEHLGHSMVDLVAQGDSIYDIIDPADHLTVRQQLTLPSALDTDRLFRCRFNTSKSLRRQSAGNKLVLIRGRFHAHPPGAYWAGNPVFTAFCAPLEPRPRPGPGPGPGPASLFLAMFQSRHAKDLALLDISESVLIYLGFERSELLCKSWYGLLHPEDLAHASAQHYRLLAESGDIQAEMVVRLQAKTGGWAWIYCLLYSEGPEGPITANNYPISDMEAWSLRQQLNSEDTQAAYVLGTPTMLPSFPENILSQEECSSTNPLFTAALGAPRSTSFPSAPELSVVSASEELPRPSKELDFSYLTFPSGPEPSLQAELSKDLVCTPPYTPHQPGGCAFLFSLHEPFQTHLPTPSSTLQEQLTPSTATFSDQLTPSSATFPDPLTSPLQGQLTETSVRSYEDQLTPCTSTFPDQLLPSTATFPEPLGSPAHEQLTPPSTAFQAHLDSPSQTFPEQLSPNPTKTYFAQEGCSFLYEKLPPSPSSPGNGDCTLLALAQLRGPLSVDVPLVPEGLLTPEASPVKQSFFHYSEKEQNEIDRLIQQISQLAQGMDRPFSAEAGTGGLEPLGGLEPLDSNLSLSGAGPPVLSLDLKPWKCQELDFLADPDNMFLEETPVEDIFMDLSTPDPSEEWGSGDPEAEGPGGAPSPCNNLSPEDHSFLEDLATYETAFETGVSAFPYDGFTDELHQLQSQVQDSFHEDGSGGEPTF.

The segment at 1-13 (MYRSTKGASKARR) is basic motif; degenerate. Positions 1–53 (MYRSTKGASKARRDQINAEIRNLKELLPLAEADKVRLSYLHIMSLACIYTRKG) constitute a bHLH domain. The stretch at 5–38 (TKGASKARRDQINAEIRNLKELLPLAEADKVRLS) forms a coiled coil. The segment at 14 to 53 (DQINAEIRNLKELLPLAEADKVRLSYLHIMSLACIYTRKG) is helix-loop-helix motif. PAS domains lie at 70–144 (SAQE…LDTD) and 203–273 (PGPG…LAES). Positions 278 to 317 (AEMVVRLQAKTGGWAWIYCLLYSEGPEGPITANNYPISDM) constitute a PAC domain. Polar residues-rich tracts occupy residues 466–476 (FSDQLTPSSAT), 506–518 (STFP…STAT), and 532–555 (TPPS…QLSP). Disordered stretches follow at residues 466–485 (FSDQ…TSPL) and 506–555 (STFP…QLSP). Residues 624–648 (YSEKEQNEIDRLIQQISQLAQGMDR) are a coiled coil. Residues 717-749 (LSTPDPSEEWGSGDPEAEGPGGAPSPCNNLSPE) are disordered.

In terms of assembly, efficient DNA binding requires dimerization with another bHLH protein. Heterodimer; forms a heterodimer with ARNT, ARNT2 or BMAL1. Post-translationally, ubiquitinated, leading to degradation by the proteosome. As to expression, brain.

The protein localises to the nucleus. In terms of biological role, transcription factor expressed in neurons of the brain that regulates the excitatory-inhibitory balance within neural circuits and is required for contextual memory in the hippocampus. Plays a key role in the structural and functional plasticity of neurons. Acts as an early-response transcription factor in both excitatory and inhibitory neurons, where it induces distinct but overlapping sets of late-response genes in these two types of neurons, allowing the synapses that form on inhibitory and excitatory neurons to be modified by neuronal activity in a manner specific to their function within a circuit, thereby facilitating appropriate circuit responses to sensory experience. In excitatory neurons, activates transcription of BDNF, which in turn controls the number of GABA-releasing synapses that form on excitatory neurons, thereby promoting an increased number of inhibitory synapses on excitatory neurons. In inhibitory neurons, regulates a distinct set of target genes that serve to increase excitatory input onto somatostatin neurons, probably resulting in enhanced feedback inhibition within cortical circuits. The excitatory and inhibitory balance in neurons affects a number of processes, such as short-term and long-term memory, acquisition of experience, fear memory, response to stress and social behavior. Acts as a regulator of dendritic spine development in olfactory bulb granule cells in a sensory-experience-dependent manner by regulating expression of MDM2. Efficient DNA binding requires dimerization with another bHLH protein, such as ARNT, ARNT2 or BMAL1. Can activate the CME (CNS midline enhancer) element. In Homo sapiens (Human), this protein is Neuronal PAS domain-containing protein 4.